A 388-amino-acid chain; its full sequence is LL-diaminopimelate aminotransferase (388 aa).

Positions 15 and 40 each coordinate substrate. Residues Tyr69, 103 to 104 (SK), Tyr128, Asn178, Tyr209, and 237 to 239 (SLS) contribute to the pyridoxal 5'-phosphate site. Lys104, Tyr128, and Asn178 together coordinate substrate. The residue at position 240 (Lys240) is an N6-(pyridoxal phosphate)lysine. Arg248 lines the pyridoxal 5'-phosphate pocket. Substrate is bound at residue Arg366.

The protein belongs to the class-I pyridoxal-phosphate-dependent aminotransferase family. LL-diaminopimelate aminotransferase subfamily. Homodimer. Requires pyridoxal 5'-phosphate as cofactor.

It catalyses the reaction (2S,6S)-2,6-diaminopimelate + 2-oxoglutarate = (S)-2,3,4,5-tetrahydrodipicolinate + L-glutamate + H2O + H(+). The protein operates within amino-acid biosynthesis; L-lysine biosynthesis via DAP pathway; LL-2,6-diaminopimelate from (S)-tetrahydrodipicolinate (aminotransferase route): step 1/1. Involved in the synthesis of meso-diaminopimelate (m-DAP or DL-DAP), required for both lysine and peptidoglycan biosynthesis. Catalyzes the direct conversion of tetrahydrodipicolinate to LL-diaminopimelate. Can also use m-DAP instead of LL-DAP as the amino-group donor. This chain is LL-diaminopimelate aminotransferase, found in Syntrophobacter fumaroxidans (strain DSM 10017 / MPOB).